Reading from the N-terminus, the 428-residue chain is Glutamate-1-semialdehyde 2,1-aminomutase (428 aa).

At K267 the chain carries N6-(pyridoxal phosphate)lysine.

Belongs to the class-III pyridoxal-phosphate-dependent aminotransferase family. HemL subfamily. In terms of assembly, homodimer. Requires pyridoxal 5'-phosphate as cofactor.

The protein resides in the cytoplasm. The enzyme catalyses (S)-4-amino-5-oxopentanoate = 5-aminolevulinate. It functions in the pathway porphyrin-containing compound metabolism; protoporphyrin-IX biosynthesis; 5-aminolevulinate from L-glutamyl-tRNA(Glu): step 2/2. In Persephonella marina (strain DSM 14350 / EX-H1), this protein is Glutamate-1-semialdehyde 2,1-aminomutase.